The sequence spans 91 residues: Elongation factor 1-beta (91 aa).

The protein belongs to the EF-1-beta/EF-1-delta family.

Promotes the exchange of GDP for GTP in EF-1-alpha/GDP, thus allowing the regeneration of EF-1-alpha/GTP that could then be used to form the ternary complex EF-1-alpha/GTP/AAtRNA. This chain is Elongation factor 1-beta (ef1b), found in Pyrococcus abyssi (strain GE5 / Orsay).